Reading from the N-terminus, the 81-residue chain is Small ribosomal subunit protein bS16c (81 aa).

It belongs to the bacterial ribosomal protein bS16 family.

It localises to the plastid. The protein localises to the chloroplast. This is Small ribosomal subunit protein bS16c from Emiliania huxleyi (Coccolithophore).